Consider the following 792-residue polypeptide: uncharacterized protein (792 aa).

A run of 25 repeats spans residues 91–102 (NSSTNATTTASI), 103–114 (NVRTSATTTASI), 115–126 (NVRTSATTTEST), 127–138 (NSNTNATTTEST), 139–150 (NSSTNATTTASI), 151–162 (NVRTSATTTEST), 163–174 (NSSTNATTTASI), 175–186 (NVRTSATTTEST), 187–198 (NSSTNATTTASI), 199–210 (NVRTSATTTEST), 211–222 (NSNTNASTNATT), 223–234 (NSSTNATTTAST), 235–246 (NVRTSATTNATT), 247–258 (NSSTNATTTAST), 259–270 (NVRTSATTTAST), 271–282 (NVRTSATTTASI), 283–294 (NVRTSATTTESI), 295–306 (NSSTNATTTEST), 307–318 (NSNTSATTTEST), 319–330 (DSNTNATTTASI), 331–342 (NVRTSATTTEST), 343–354 (NSNTSATTTEST), 355–366 (DSNTSATTTAST), 367–378 (NSSTNATTTAST), and 379–390 (NSSTNATTTEST). Positions 91–390 (NSSTNATTTA…STNATTTEST (300 aa)) are 25 X 12 AA tandem repeat of N-[SV]-[RS]-T-[NS]-A-T-T-T-[AE]-[ST]-[IT]. The segment at 113-417 (SINVRTSATT…RFHPVTDINK (305 aa)) is disordered. The span at 118 to 393 (TSATTTESTN…ATTTESTNAS (276 aa)) shows a compositional bias: low complexity. Over residues 394-417 (AKEDANKDGNAEDNRFHPVTDINK) the composition is skewed to basic and acidic residues.

This is an uncharacterized protein from Saccharomyces cerevisiae (strain ATCC 204508 / S288c) (Baker's yeast).